The primary structure comprises 347 residues: Anthranilate phosphoribosyltransferase (347 aa).

5-phospho-alpha-D-ribose 1-diphosphate is bound by residues Gly88, 91–92 (GD), Thr96, 98–101 (NIST), 116–124 (KHGGRSVSS), and Ser128. Gly88 contributes to the anthranilate binding site. Ser100 lines the Mg(2+) pocket. Arg174 is a binding site for anthranilate. Positions 233 and 234 each coordinate Mg(2+).

Belongs to the anthranilate phosphoribosyltransferase family. In terms of assembly, homodimer. It depends on Mg(2+) as a cofactor.

It carries out the reaction N-(5-phospho-beta-D-ribosyl)anthranilate + diphosphate = 5-phospho-alpha-D-ribose 1-diphosphate + anthranilate. It participates in amino-acid biosynthesis; L-tryptophan biosynthesis; L-tryptophan from chorismate: step 2/5. Catalyzes the transfer of the phosphoribosyl group of 5-phosphorylribose-1-pyrophosphate (PRPP) to anthranilate to yield N-(5'-phosphoribosyl)-anthranilate (PRA). The chain is Anthranilate phosphoribosyltransferase from Polaromonas sp. (strain JS666 / ATCC BAA-500).